An 875-amino-acid polypeptide reads, in one-letter code: Lysine-specific demethylase 7A (875 aa).

A PHD-type zinc finger spans residues 5–56 (PLYCVCRQPYDVNRFMIECDICKDWFHGSCVQVVEHHAADIDVYHCPNCEPI). Residues 197-353 (FSDTRMSNLV…MQLRCYEMER (157 aa)) form the JmjC domain. Thr-246 contacts substrate. Positions 249 and 251 each coordinate Fe cation. Lys-266 is a binding site for substrate. Fe cation is bound at residue His-321. Disordered stretches follow at residues 442 to 506 (EDDS…SRKL), 629 to 710 (SQGE…NTDC), and 742 to 820 (QGNG…ATAK). The segment covering 448 to 462 (AVKTQGSAECSLSRS) has biased composition (polar residues). The span at 478 to 505 (QDHHHHRRRHHHHHHHHHHHHHHHHSRK) shows a compositional bias: basic residues. Residues 650–663 (SDSKAGDSAEKCSL) show a composition bias toward basic and acidic residues. Over residues 688 to 697 (SHRHSHHKQA) the composition is skewed to basic residues. Over residues 742-762 (QGNGSSTSSSSDMWDSSEPCS) the composition is skewed to low complexity.

Belongs to the JHDM1 histone demethylase family. JHDM1D subfamily. Fe(2+) serves as cofactor. Predominantly expressed in brain.

It is found in the nucleus. Functionally, histone demethylase required for brain development. Specifically demethylates dimethylated 'Lys-9' and 'Lys-27' (H3K9me2 and H3K27me2, respectively) of histone H3 and monomethylated histone H4 'Lys-20' residue (H4K20Me1), thereby playing a central role in histone code. The polypeptide is Lysine-specific demethylase 7A (kdm7a) (Danio rerio (Zebrafish)).